A 429-amino-acid polypeptide reads, in one-letter code: Probable proton-coupled zinc antiporter SLC30A4 (429 aa).

Topologically, residues 1–113 are cytoplasmic; sequence MAGSGAWKRL…LLKQRKVKTR (113 aa). The chain crosses the membrane as a helical span at residues 114–134; sequence LTIAAVLYLLFMIGELVGGYI. The Lumenal portion of the chain corresponds to 135 to 143; the sequence is ANSLAIMTD. A helical membrane pass occupies residues 144–164; sequence ALHMLTDLSAIILTLLALWLS. Zn(2+) contacts are provided by His-146 and Asp-150. Residues 165 to 178 are Cytoplasmic-facing; the sequence is SKSPTKRFTFGFHR. The chain crosses the membrane as a helical span at residues 179–199; it reads LEVLSAMISVLLVYILMGFLL. The Lumenal portion of the chain corresponds to 200–216; it reads YEAVQRTIHMKYEINGD. A helical membrane pass occupies residues 217–237; that stretch reads IMLITAAIGVAVNVIMGFLLN. At 238 to 274 the chain is on the cytoplasmic side; it reads QSGHHHAHSHSLPSNSPTTGPRCGHNQGQDSLAVRAA. A zinc binding region spans residues 240 to 264; it reads GHHHAHSHSLPSNSPTTGPRCGHNQ. Residues 275-295 form a helical membrane-spanning segment; it reads FVHALGDLVQSVGVLIAAYII. The Zn(2+) site is built by His-277 and Asp-281. At 296–310 the chain is on the lumenal side; sequence RFKPEYRIADPICTY. Residues 311–331 form a helical membrane-spanning segment; sequence VFSLLVAFTTFRIIWDTVVII. Residues 332 to 429 are Cytoplasmic-facing; that stretch reads LEGVPSHLNV…TCANCQSSSS (98 aa).

The protein belongs to the cation diffusion facilitator (CDF) transporter (TC 2.A.4) family. SLC30A subfamily. Homodimerization could regulate efficiency for zinc transport. Interacts with TMEM163.

The protein localises to the endosome membrane. It localises to the late endosome membrane. It is found in the lysosome membrane. The catalysed reaction is Zn(2+)(in) + 2 H(+)(out) = Zn(2+)(out) + 2 H(+)(in). Its function is as follows. Probable proton-coupled zinc ion antiporter mediating zinc import from cytoplasm potentially into the endocytic compartment. Controls zinc deposition in milk. The chain is Probable proton-coupled zinc antiporter SLC30A4 from Bos taurus (Bovine).